A 166-amino-acid polypeptide reads, in one-letter code: Urease accessory protein UreE (166 aa).

The protein belongs to the UreE family.

It is found in the cytoplasm. Involved in urease metallocenter assembly. Binds nickel. Probably functions as a nickel donor during metallocenter assembly. In Pseudomonas fluorescens (strain Pf0-1), this protein is Urease accessory protein UreE.